A 181-amino-acid polypeptide reads, in one-letter code: Translationally-controlled tumor protein homolog (181 aa).

In terms of domain architecture, TCTP spans 1-181; the sequence is MLIYKDIFTD…VKEAIIEEKC (181 aa).

Belongs to the TCTP family.

Its subcellular location is the cytoplasm. Involved in calcium binding and microtubule stabilization. The polypeptide is Translationally-controlled tumor protein homolog (tct-1) (Caenorhabditis elegans).